A 30-amino-acid polypeptide reads, in one-letter code: Kalata-B16 (30 aa).

The cyclopeptide (Gly-Asp) cross-link spans 1-30 (GIPCAESCVYIPCTITALLGCKCQDKVCYD). Disulfide bonds link Cys4–Cys21, Cys8–Cys23, and Cys13–Cys28.

Post-translationally, this is a cyclic peptide.

Its function is as follows. Probably participates in a plant defense mechanism. This chain is Kalata-B16, found in Oldenlandia affinis.